A 130-amino-acid chain; its full sequence is Large ribosomal subunit protein bL12 (130 aa).

This sequence belongs to the bacterial ribosomal protein bL12 family. As to quaternary structure, homodimer. Part of the ribosomal stalk of the 50S ribosomal subunit. Forms a multimeric L10(L12)X complex, where L10 forms an elongated spine to which 2 to 4 L12 dimers bind in a sequential fashion. Binds GTP-bound translation factors.

Forms part of the ribosomal stalk which helps the ribosome interact with GTP-bound translation factors. Is thus essential for accurate translation. The protein is Large ribosomal subunit protein bL12 of Synechococcus sp. (strain WH7803).